Consider the following 325-residue polypeptide: N-acetyl-gamma-glutamyl-phosphate reductase (325 aa).

Residue cysteine 135 is part of the active site.

This sequence belongs to the NAGSA dehydrogenase family. Type 1 subfamily.

It is found in the cytoplasm. The enzyme catalyses N-acetyl-L-glutamate 5-semialdehyde + phosphate + NADP(+) = N-acetyl-L-glutamyl 5-phosphate + NADPH + H(+). Its pathway is amino-acid biosynthesis; L-arginine biosynthesis; N(2)-acetyl-L-ornithine from L-glutamate: step 3/4. In terms of biological role, catalyzes the NADPH-dependent reduction of N-acetyl-5-glutamyl phosphate to yield N-acetyl-L-glutamate 5-semialdehyde. This Flavobacterium johnsoniae (strain ATCC 17061 / DSM 2064 / JCM 8514 / BCRC 14874 / CCUG 350202 / NBRC 14942 / NCIMB 11054 / UW101) (Cytophaga johnsonae) protein is N-acetyl-gamma-glutamyl-phosphate reductase.